The sequence spans 662 residues: uncharacterized protein (662 aa).

16 helical membrane-spanning segments follow: residues 10–30 (SSIV…GWPV), 46–66 (PVIG…FLPI), 68–88 (AINL…LSKG), 101–121 (GFCW…EIIP), 167–187 (LIYY…TGAT), 193–213 (IALT…LAVA), 217–237 (SAYA…KPAV), 263–283 (PWVP…MAYL), 285–305 (ILYS…AILA), 312–332 (MWAG…LSVS), 342–362 (EVLI…AVLI), 373–393 (KVVE…LDIP), 394–414 (GFWL…FLIW), 432–452 (ALTV…SVIM), 460–480 (VLIP…STTI), and 485–505 (LVGR…ILVG).

The protein resides in the cell membrane. This is an uncharacterized protein from Sinorhizobium fredii (strain NBRC 101917 / NGR234).